Reading from the N-terminus, the 78-residue chain is D-alanyl carrier protein (78 aa).

The 78-residue stretch at 1 to 78 (MEFREQVLDL…KIVEALEELR (78 aa)) folds into the Carrier domain. Ser36 is subject to O-(pantetheine 4'-phosphoryl)serine.

It belongs to the DltC family. In terms of processing, 4'-phosphopantetheine is transferred from CoA to a specific serine of apo-DCP.

The protein resides in the cytoplasm. Its pathway is cell wall biogenesis; lipoteichoic acid biosynthesis. In terms of biological role, carrier protein involved in the D-alanylation of lipoteichoic acid (LTA). The loading of thioester-linked D-alanine onto DltC is catalyzed by D-alanine--D-alanyl carrier protein ligase DltA. The DltC-carried D-alanyl group is further transferred to cell membrane phosphatidylglycerol (PG) by forming an ester bond, probably catalyzed by DltD. D-alanylation of LTA plays an important role in modulating the properties of the cell wall in Gram-positive bacteria, influencing the net charge of the cell wall. This is D-alanyl carrier protein from Staphylococcus epidermidis (strain ATCC 35984 / DSM 28319 / BCRC 17069 / CCUG 31568 / BM 3577 / RP62A).